We begin with the raw amino-acid sequence, 577 residues long: Arginine--tRNA ligase (577 aa).

The 'HIGH' region signature appears at 122–132; the sequence is PNVAKEMHVGH.

The protein belongs to the class-I aminoacyl-tRNA synthetase family. In terms of assembly, monomer.

The protein localises to the cytoplasm. It carries out the reaction tRNA(Arg) + L-arginine + ATP = L-arginyl-tRNA(Arg) + AMP + diphosphate. The protein is Arginine--tRNA ligase of Shigella dysenteriae serotype 1 (strain Sd197).